The sequence spans 536 residues: Octopamine receptor beta-2R (536 aa).

Residues 1–26 (MLLCDGLGPEPPRQRHRNRTSAARIR) form a disordered region. The Extracellular segment spans residues 1 to 157 (MLLCDGLGPE…LDNIVWVFKA (157 aa)). Positions 14–26 (QRHRNRTSAARIR) are enriched in basic residues. Asn-18, Asn-92, Asn-113, and Asn-126 each carry an N-linked (GlcNAc...) asparagine glycan. Residues 158–178 (FVMLLIIIAAICGNLLVIISV) traverse the membrane as a helical segment. Topologically, residues 179-190 (MRVRKLRVITNY) are cytoplasmic. The chain crosses the membrane as a helical span at residues 191–211 (FVVSLAMADIMVAIMAMTFNF). Residues 212–233 (SVQVTGRWNFSPFLCDLWNSLD) lie on the Extracellular side of the membrane. A helical transmembrane segment spans residues 234 to 256 (VYFSTASILHLCCISVDRYYAIV). The Cytoplasmic segment spans residues 257–270 (KPLKYPISMTKRVV). Residues 271–291 (GIMLLNTWISPALLSFLPIFI) form a helical membrane-spanning segment. The Extracellular portion of the chain corresponds to 292 to 320 (GWYTTPQHQQFVIQNPTQCSFVVNKYYAV). The chain crosses the membrane as a helical span at residues 321-341 (ISSSISFWIPCTIMIFTYLAI). The Cytoplasmic segment spans residues 342–412 (FREANRQEKQ…MKREHKAART (71 aa)). Residues 413–433 (LGIIMGTFILCWLPFFLWYTL) form a helical membrane-spanning segment. The Extracellular segment spans residues 434–444 (SMTCEECQVPD). Residues 445–465 (IVVSILFWIGYFNSTLNPLIY) traverse the membrane as a helical segment. The Cytoplasmic segment spans residues 466–536 (AYFNRDFREA…RRQSQMVDNL (71 aa)).

The protein belongs to the G-protein coupled receptor 1 family. As to expression, in the adult, expressed in the superior protocerebrum and the optic lobe medulla of the central nervous system, nurse cells of egg chambers in the ovary at oogenic stages 1-10, and spermatogonia and spermatocytes in the testis. Expressed in the oviduct epithelium. Also expressed in the spermatheca. Expressed in embryonic and larval ventral nerve cord and brain lobe, embryonic and larval salivary glands and larval imaginal disk and midgut. Also expressed in larval synaptic boutons.

Its subcellular location is the cell membrane. In terms of biological role, autoreceptor for octopamine (OA), which is a neurotransmitter, neurohormone, and neuromodulator in invertebrates. Essential for ovulation and fertilization. During ovulation it mediates the OA-induced relaxation of the oviduct visceral muscles, by increasing cAMP levels and activating effectors such as calmodulin-dependent kinase II (CaMKII) and cAMP-dependent protein kinase A (PKA) pathways. Positively regulates synaptic growth; an action that is antagonized by Octbeta1R. This Drosophila melanogaster (Fruit fly) protein is Octopamine receptor beta-2R.